Here is a 175-residue protein sequence, read N- to C-terminus: Tumor necrosis factor receptor superfamily member 13C (175 aa).

Residues 1–71 (MGARRLRVRS…EGSALRPDVA (71 aa)) are Extracellular-facing. A TNFR-Cys; truncated repeat occupies 21–38 (QCNQTECFDPLVRNCVSC). 2 disulfide bridges follow: Cys-22-Cys-35 and Cys-27-Cys-38. The N-linked (GlcNAc...) asparagine glycan is linked to Asn-23. The essential for TNFSF13B/TALL1/BAFF/BLyS binding stretch occupies residues 29–34 (DPLVRN). A helical; Signal-anchor for type III membrane protein membrane pass occupies residues 72–92 (LLVGAPALLGLILALTLVGLV). Residues 93-175 (SLVSWRWRQQ…VTTKTAGPEQ (83 aa)) are Cytoplasmic-facing. Positions 124–175 (VPSSETPHASAPTWPPLKEDADSALPRHSVPVPATELGSTELVTTKTAGPEQ) are disordered. Residues 160–175 (LGSTELVTTKTAGPEQ) show a composition bias toward polar residues.

Highly expressed in spleen and testis; detected at lower levels in lung and thymus.

Its subcellular location is the membrane. B-cell receptor specific for TNFSF13B/TALL1/BAFF/BLyS. Promotes the survival of mature B-cells and the B-cell response. This is Tumor necrosis factor receptor superfamily member 13C (Tnfrsf13c) from Mus musculus (Mouse).